The following is a 72-amino-acid chain: Translation initiation factor IF-1 (72 aa).

The 72-residue stretch at 1–72 (MAKEKDTIRT…PTRGRIVYRK (72 aa)) folds into the S1-like domain.

This sequence belongs to the IF-1 family. Component of the 30S ribosomal translation pre-initiation complex which assembles on the 30S ribosome in the order IF-2 and IF-3, IF-1 and N-formylmethionyl-tRNA(fMet); mRNA recruitment can occur at any time during PIC assembly.

It localises to the cytoplasm. Its function is as follows. One of the essential components for the initiation of protein synthesis. Stabilizes the binding of IF-2 and IF-3 on the 30S subunit to which N-formylmethionyl-tRNA(fMet) subsequently binds. Helps modulate mRNA selection, yielding the 30S pre-initiation complex (PIC). Upon addition of the 50S ribosomal subunit IF-1, IF-2 and IF-3 are released leaving the mature 70S translation initiation complex. This chain is Translation initiation factor IF-1, found in Thermus thermophilus (strain ATCC BAA-163 / DSM 7039 / HB27).